The primary structure comprises 88 residues: Small ribosomal subunit protein uS15 (88 aa).

The protein belongs to the universal ribosomal protein uS15 family. Part of the 30S ribosomal subunit. Forms a bridge to the 50S subunit in the 70S ribosome, contacting the 23S rRNA.

Functionally, one of the primary rRNA binding proteins, it binds directly to 16S rRNA where it helps nucleate assembly of the platform of the 30S subunit by binding and bridging several RNA helices of the 16S rRNA. Its function is as follows. Forms an intersubunit bridge (bridge B4) with the 23S rRNA of the 50S subunit in the ribosome. The sequence is that of Small ribosomal subunit protein uS15 from Geobacter sulfurreducens (strain ATCC 51573 / DSM 12127 / PCA).